Consider the following 450-residue polypeptide: Glycerol dehydrogenase 1 (450 aa).

Residues Asp99, 155–159 (GKTMD), and 177–180 (TTAS) each bind NAD(+). Asp182 provides a ligand contact to substrate. NAD(+) contacts are provided by Ser186, Leu188, and Tyr192. The substrate site is built by Asp232, His315, and His333. Residues Asp232, His315, and His333 each contribute to the Zn(2+) site.

Belongs to the iron-containing alcohol dehydrogenase family. It depends on Zn(2+) as a cofactor.

The protein localises to the mitochondrion. The enzyme catalyses glycerol + NAD(+) = dihydroxyacetone + NADH + H(+). Its pathway is polyol metabolism; glycerol fermentation; glycerone phosphate from glycerol (oxidative route): step 1/2. Its function is as follows. Glycerol dehydrogenase involved in the assimilation of glycerol. The chain is Glycerol dehydrogenase 1 (gld1) from Schizosaccharomyces pombe (strain 972 / ATCC 24843) (Fission yeast).